Consider the following 98-residue polypeptide: Secreted LysM effector Mgx1LysM (98 aa).

Positions 1-18 are cleaved as a signal peptide; sequence MKVTTIIAALLSVAVVDA. 2 disulfides stabilise this stretch: Cys31–Cys89 and Cys62–Cys97. A LysM domain is found at 37 to 85; it reads IPYVVKKGDTLTHIAHDIYKRKVGICDLAYTNHIGKNPNLIYAGQTLLI. Chitin is bound by residues Gly44, Thr48, Asn75, and Ile77.

It belongs to the secreted LysM effector family. In terms of assembly, forms homodimers in a chitin-independent manner through interactions at the N-termini of Mgx1LysM monomers. Homodimers are further polymerized in a chitin-dependent manner.

The protein resides in the secreted. The protein localises to the cell wall. In terms of biological role, secreted effector that enables the plant pathogenic fungus to manipulate host defenses for successful infection. Binds chitin and suppresses the chitin-induced reactive oxygen species (ROS) burst. Chitin-induced polymerization of homodimers forms a contiguous Mg1LysM highly oligomeric super-complexe that is anchored to the chitin in the fungal cell wall to prevent hydrolysis by host chitinases. In Zymoseptoria tritici (strain ST99CH_3D7), this protein is Secreted LysM effector Mgx1LysM.